The chain runs to 343 residues: Lactamase-like protein nscB (343 aa).

Zn(2+) contacts are provided by His-118, His-120, Asp-122, and His-123. Residue Asp-122 is the Proton donor/acceptor of the active site.

It belongs to the metallo-beta-lactamase superfamily. Zn(2+) is required as a cofactor.

The protein operates within secondary metabolite biosynthesis. In terms of biological role, lactamase-like protein; part of the gene cluster that mediates the biosynthesis of neosartoricin B, a prenylated anthracenone that probably exhibits T-cell antiproliferative activity, suggestive of a physiological role as an immunosuppressive agent. The non-reducing polyketide synthase nscA probably synthesizes and cyclizes the decaketide backbone. The hydrolase nscB then mediates the product release through hydrolysis followed by spontaneous decarboxylation. The prenyltransferase nscD catalyzes the addition of the dimethylallyl group to the aromatic C5. The FAD-dependent monooxygenase nscC is then responsible for the stereospecific hydroxylation at C2. Neosartoricin B can be converted into two additional compounds neosartoricins C and D. Neosartoricin C is a spirocyclic compound that is cyclized through the attack of C3 hydroxyl on C14, followed by dehydration. On the other hand, neosartoricin D is a further cyclized compound in which attack of C2 on C14 in neosartoricin C results in the formation of the acetal-containing dioxabicyclo-octanone ring. Both of these compounds are novel and possibly represent related metabolites of the gene cluster. The chain is Lactamase-like protein nscB from Arthroderma otae (strain ATCC MYA-4605 / CBS 113480) (Microsporum canis).